A 372-amino-acid polypeptide reads, in one-letter code: MLEKYISIKMRVNPVNNTINNTDDIKSTSLFPKKKNVFFIEGGGTKGVYAMGVLNYLYDENVYIKLQDVDIFGGTSVGSILAVGLSLGYQKKDFEKFVETFDLSKFVDSKYYAPFTLYRFLTKGHLYDDTNRQTLVKKILNINIETIRSHLDLPIDSDFEGTDITFWHLKKLIKKYPQIYKHLLINSVDISREQQIFMTTLDDNWDNIKLYDSILASSAFPFVFPSSKFYYNSTTQKYQYESLTDTNDKITENSFIDGGVANNIPLDYLILNSERFTDCNLWSLQFTTTPAYSKITGPIALIQKLINFAFSYGRKSFGLELIHEKYQVNVINLNLSANTFDTYNNNQIKEITRQIYDQCLSGQLHFDNVDSQ.

In terms of domain architecture, PNPLA spans 38 to 270 (FFIEGGGTKG…ANNIPLDYLI (233 aa)). The GXGXXG motif lies at 42-47 (GGGTKG). Residues 74-78 (GTSVG) carry the GXSXG motif. The Nucleophile role is filled by S76. D257 (proton acceptor) is an active-site residue. The short motif at 257–259 (DGG) is the DGA/G element.

Functionally, probable lipid hydrolase. This is an uncharacterized protein from Acanthamoeba polyphaga (Amoeba).